Reading from the N-terminus, the 210-residue chain is Thymidylate kinase (210 aa).

An ATP-binding site is contributed by 10-17; it reads GPEGAGKS.

Belongs to the thymidylate kinase family.

It carries out the reaction dTMP + ATP = dTDP + ADP. Phosphorylation of dTMP to form dTDP in both de novo and salvage pathways of dTTP synthesis. The polypeptide is Thymidylate kinase (Pseudomonas fluorescens (strain ATCC BAA-477 / NRRL B-23932 / Pf-5)).